We begin with the raw amino-acid sequence, 552 residues long: CTP synthase (552 aa).

The segment at 1-270 is amidoligase domain; the sequence is MTKYVFVTGG…DRIICDELKL (270 aa). A CTP-binding site is contributed by serine 13. Serine 13 is a UTP binding site. Residues 14-19 and aspartate 71 each bind ATP; that span reads SLGKGI. Mg(2+) is bound by residues aspartate 71 and glutamate 144. Residues 151–153, 191–196, and lysine 227 each bind CTP; these read DIE and KTKPTQ. UTP contacts are provided by residues 191–196 and lysine 227; that span reads KTKPTQ. Residues 295–547 form the Glutamine amidotransferase type-1 domain; sequence TIGMVGKYVD…VEAALANKQA (253 aa). An L-glutamine-binding site is contributed by glycine 356. The active-site Nucleophile; for glutamine hydrolysis is cysteine 383. Residues 384-387, glutamate 407, and arginine 473 contribute to the L-glutamine site; that span reads LGMQ. Catalysis depends on residues histidine 520 and glutamate 522.

It belongs to the CTP synthase family. As to quaternary structure, homotetramer.

It carries out the reaction UTP + L-glutamine + ATP + H2O = CTP + L-glutamate + ADP + phosphate + 2 H(+). The catalysed reaction is L-glutamine + H2O = L-glutamate + NH4(+). It catalyses the reaction UTP + NH4(+) + ATP = CTP + ADP + phosphate + 2 H(+). Its pathway is pyrimidine metabolism; CTP biosynthesis via de novo pathway; CTP from UDP: step 2/2. With respect to regulation, allosterically activated by GTP, when glutamine is the substrate; GTP has no effect on the reaction when ammonia is the substrate. The allosteric effector GTP functions by stabilizing the protein conformation that binds the tetrahedral intermediate(s) formed during glutamine hydrolysis. Inhibited by the product CTP, via allosteric rather than competitive inhibition. In terms of biological role, catalyzes the ATP-dependent amination of UTP to CTP with either L-glutamine or ammonia as the source of nitrogen. Regulates intracellular CTP levels through interactions with the four ribonucleotide triphosphates. In Burkholderia vietnamiensis (strain G4 / LMG 22486) (Burkholderia cepacia (strain R1808)), this protein is CTP synthase.